A 192-amino-acid polypeptide reads, in one-letter code: UPF0149 protein VIBHAR_03551 (192 aa).

It belongs to the UPF0149 family.

This chain is UPF0149 protein VIBHAR_03551, found in Vibrio campbellii (strain ATCC BAA-1116).